We begin with the raw amino-acid sequence, 251 residues long: Cytochrome c oxidase subunit 2 (251 aa).

A signal peptide spans 1-15 (MLNLLYNQIFNVILN). Over 16-41 (DVPTPYNTYFQDSATPNQEGILELHD) the chain is Mitochondrial intermembrane. The chain crosses the membrane as a helical span at residues 42 to 62 (NIMFYLLVILGLVSWLLFTIT). At 63 to 82 (RTYSKNPIAYKYIKHGQTIE) the chain is on the mitochondrial matrix side. The chain crosses the membrane as a helical span at residues 83–103 (IIWTIFPAVILLIIAFPSFIL). Residues 104 to 251 (LYLCDEVISP…PAFLEWLNEQ (148 aa)) lie on the Mitochondrial intermembrane side of the membrane. Positions 186, 221, 223, 225, 229, and 232 each coordinate Cu cation. Residue Glu-223 coordinates Mg(2+).

This sequence belongs to the cytochrome c oxidase subunit 2 family. As to quaternary structure, component of the cytochrome c oxidase (complex IV, CIV), a multisubunit enzyme composed of a catalytic core of 3 subunits and several supernumerary subunits. The complex exists as a monomer or a dimer and forms supercomplexes (SCs) in the inner mitochondrial membrane with ubiquinol-cytochrome c oxidoreductase (cytochrome b-c1 complex, complex III, CIII). Cu cation serves as cofactor. In terms of processing, the signal sequence of COX2 is processed by IMP1.

The protein resides in the mitochondrion inner membrane. The enzyme catalyses 4 Fe(II)-[cytochrome c] + O2 + 8 H(+)(in) = 4 Fe(III)-[cytochrome c] + 2 H2O + 4 H(+)(out). Component of the cytochrome c oxidase, the last enzyme in the mitochondrial electron transport chain which drives oxidative phosphorylation. The respiratory chain contains 3 multisubunit complexes succinate dehydrogenase (complex II, CII), ubiquinol-cytochrome c oxidoreductase (cytochrome b-c1 complex, complex III, CIII) and cytochrome c oxidase (complex IV, CIV), that cooperate to transfer electrons derived from NADH and succinate to molecular oxygen, creating an electrochemical gradient over the inner membrane that drives transmembrane transport and the ATP synthase. Cytochrome c oxidase is the component of the respiratory chain that catalyzes the reduction of oxygen to water. Electrons originating from reduced cytochrome c in the intermembrane space (IMS) are transferred via the dinuclear copper A center (CU(A)) of subunit 2 and heme A of subunit 1 to the active site in subunit 1, a binuclear center (BNC) formed by heme A3 and copper B (CU(B)). The BNC reduces molecular oxygen to 2 water molecules using 4 electrons from cytochrome c in the IMS and 4 protons from the mitochondrial matrix. The protein is Cytochrome c oxidase subunit 2 (COX2) of Lachancea thermotolerans (strain ATCC 56472 / CBS 6340 / NRRL Y-8284) (Yeast).